The chain runs to 328 residues: COP9 signalosome complex subunit 6 (328 aa).

The region spanning 42 to 175 (VALHPLVILN…VSVFESVIDI (134 aa)) is the MPN domain.

This sequence belongs to the peptidase M67A family. CSN6 subfamily. In terms of assembly, component of the CSN complex, composed of COPS1/GPS1, COPS2, COPS3, COPS4, COPS5, COPS6, COPS7 (COPS7A or COPS7B), COPS8 and COPS9. In the complex, it probably interacts directly with COPS2, COPS4, COPS5, COPS7 (COPS7A or COPS7B) and COPS9. Interacts with the translation initiation factor EIF3S6. Interacts weakly with RBX1. Directly interacts with COP1 and 14-3-3 protein sigma/SFN. Interacts with ERCC6.

Its subcellular location is the cytoplasm. The protein localises to the nucleus. In terms of biological role, component of the COP9 signalosome complex (CSN), a complex involved in various cellular and developmental processes. The CSN complex is an essential regulator of the ubiquitin (Ubl) conjugation pathway by mediating the deneddylation of the cullin subunits of SCF-type E3 ligase complexes, leading to decrease the Ubl ligase activity of SCF-type complexes such as SCF, CSA or DDB2. The complex is also involved in phosphorylation of p53/TP53, c-jun/JUN, IkappaBalpha/NFKBIA, ITPK1 and IRF8, possibly via its association with CK2 and PKD kinases. CSN-dependent phosphorylation of TP53 and JUN promotes and protects degradation by the Ubl system, respectively. Has some glucocorticoid receptor-responsive activity. Stabilizes COP1 through reducing COP1 auto-ubiquitination and decelerating COP1 turnover rate, hence regulates the ubiquitination of COP1 targets, including SFN. The chain is COP9 signalosome complex subunit 6 (COPS6) from Pongo abelii (Sumatran orangutan).